We begin with the raw amino-acid sequence, 155 residues long: Small ribosomal subunit protein uS7cz/uS7cy (155 aa).

This sequence belongs to the universal ribosomal protein uS7 family. Part of the 30S ribosomal subunit.

The protein resides in the plastid. Its subcellular location is the chloroplast. Its function is as follows. One of the primary rRNA binding proteins, it binds directly to 16S rRNA where it nucleates assembly of the head domain of the 30S subunit. The protein is Small ribosomal subunit protein uS7cz/uS7cy (rps7-A) of Guizotia abyssinica (Niger).